The sequence spans 168 residues: Nucleoside deoxyribosyltransferase (168 aa).

The active-site Nucleophile is glutamate 103.

This sequence belongs to the nucleoside deoxyribosyltransferase family.

The enzyme catalyses 2-deoxy-D-ribosyl-base(1) + base(2) = 2-deoxy-D-ribosyl-base(2) + base(1).. The protein operates within nucleotide metabolism; nucleotide salvage pathway. In terms of biological role, catalyzes the cleavage of the glycosidic bond of 2'-deoxyribonucleosides and the transfer of the deoxyribosyl moiety to an acceptor purine or pyrimidine base. This Limosilactobacillus fermentum (Lactobacillus fermentum) protein is Nucleoside deoxyribosyltransferase (ntd).